The sequence spans 1875 residues: Nonribosomal peptide synthetase otaB (1875 aa).

Positions 202-590 (GQVRENGDRA…SIRFAGRRQA (389 aa)) are adenylation 1. In terms of domain architecture, Carrier spans 724–800 (SPMTAAERVM…DLVAHIKDAG (77 aa)). Position 761 is an O-(pantetheine 4'-phosphoryl)serine (S761). The segment at 836 to 1245 (EDVYPCTTLQ…LVSPLDEERL (410 aa)) is condensation. The adenylation 2 stretch occupies residues 1264–1659 (QKQSYAQPQA…ARKDTQVKIR (396 aa)).

This sequence belongs to the NRP synthetase family.

It catalyses the reaction 7-carboxymellein + L-phenylalanine + ATP = ochratoxin B + ADP + phosphate + H(+). The protein operates within mycotoxin biosynthesis. Its function is as follows. Nonribosomal peptide synthetase; part of the gene cluster that mediates the biosynthesis of ochratoxin A (OTA), a mycotoxin composed of a chlorinated type I polyketide dihydroisocoumarin moiety linked to L-phenylalanine, and demonstrated to have nephrotoxic, immunotoxic, genotoxic, neurotoxic, and teratogenic properties. OtaB is responsible for the linking of phenylalanine to the dihydroisocoumarin ring. The pathway begins with the highly reducing polyketide synthase otaA that catalyzes the formation of the isocoumarin group during the initial stages of biosynthesis, starting from one acetate and 4 malonate units, to originate the characteristic pentaketide skeleton 7-methylmellein (7-MM) of the OTA molecule. The newly identified cyclase otaY might be involved in the polyketide cyclization reaction during the initial steps of the OTA biosynthesis. 7-MM is then oxidized into 7-carboxymellein (also called ochratoxin beta) by the cytochrome P450 monooxygenase otaC. The NRPS encoded by the otaB gene is involved in the linking of phenylalanine to the dihydroisocoumarin ring. The reaction catalyzed by NRPS results in the production of ochratoxin B (OTB), which is the non-chlorinated analog of OTA and which subsequently serves as the substrate of the halogenase otaD for chlorination activity to form the final molecular structure of OTA, containing a chlorine atom in the C-5 position of the molecule. This is Nonribosomal peptide synthetase otaB from Aspergillus carbonarius (strain ITEM 5010).